A 589-amino-acid chain; its full sequence is L-fucose isomerase (589 aa).

Catalysis depends on proton acceptor residues Glu340 and Asp364. 3 residues coordinate Mn(2+): Glu340, Asp364, and His527.

This sequence belongs to the L-fucose isomerase family. Mn(2+) is required as a cofactor.

The protein localises to the cytoplasm. It carries out the reaction L-fucose = L-fuculose. Its pathway is carbohydrate degradation; L-fucose degradation; L-lactaldehyde and glycerone phosphate from L-fucose: step 1/3. Converts the aldose L-fucose into the corresponding ketose L-fuculose. This is L-fucose isomerase from Haemophilus influenzae (strain PittEE).